The primary structure comprises 110 residues: MASRRSRPQAASFRNGRRRQPTSYNDLLRMFGQMRVRKPPAQPTQAIIAEPGDLRHDLNQQERATLSSNVQRFFMIGHGSLTADAGGLTYTVSWVPTKQIQRKVAPPAGP.

Residues 1-24 form a disordered region; the sequence is MASRRSRPQAASFRNGRRRQPTSY.

It belongs to the arteriviridae nucleocapsid family.

It is found in the virion. The sequence is that of Nucleoprotein (N) from Equine arteritis virus (strain Bucyrus) (EAV).